A 307-amino-acid polypeptide reads, in one-letter code: 2-dehydropantoate 2-reductase (307 aa).

NADP(+) is bound by residues 7–12 (GSGAMG), Asn102, and Ala128. Asn102 contributes to the substrate binding site. The Proton donor role is filled by Lys184. The substrate site is built by Asn188, Asn192, and Ser255. Glu268 lines the NADP(+) pocket.

This sequence belongs to the ketopantoate reductase family.

It localises to the cytoplasm. The catalysed reaction is (R)-pantoate + NADP(+) = 2-dehydropantoate + NADPH + H(+). It participates in cofactor biosynthesis; (R)-pantothenate biosynthesis; (R)-pantoate from 3-methyl-2-oxobutanoate: step 2/2. Catalyzes the NADPH-dependent reduction of ketopantoate into pantoic acid. In Streptococcus pyogenes serotype M6 (strain ATCC BAA-946 / MGAS10394), this protein is 2-dehydropantoate 2-reductase (apbA).